A 657-amino-acid chain; its full sequence is tRNA 5-methylaminomethyl-2-thiouridine biosynthesis bifunctional protein MnmC (657 aa).

The interval 1–236 (MPDRLVPATL…KRAMLVGEYA (236 aa)) is tRNA (mnm(5)s(2)U34)-methyltransferase. The segment at 261 to 657 (IGAGVAGCAV…LRARQVSAAD (397 aa)) is FAD-dependent cmnm(5)s(2)U34 oxidoreductase.

The protein in the N-terminal section; belongs to the methyltransferase superfamily. tRNA (mnm(5)s(2)U34)-methyltransferase family. It in the C-terminal section; belongs to the DAO family. The cofactor is FAD.

It is found in the cytoplasm. The enzyme catalyses 5-aminomethyl-2-thiouridine(34) in tRNA + S-adenosyl-L-methionine = 5-methylaminomethyl-2-thiouridine(34) in tRNA + S-adenosyl-L-homocysteine + H(+). Its function is as follows. Catalyzes the last two steps in the biosynthesis of 5-methylaminomethyl-2-thiouridine (mnm(5)s(2)U) at the wobble position (U34) in tRNA. Catalyzes the FAD-dependent demodification of cmnm(5)s(2)U34 to nm(5)s(2)U34, followed by the transfer of a methyl group from S-adenosyl-L-methionine to nm(5)s(2)U34, to form mnm(5)s(2)U34. This Burkholderia multivorans (strain ATCC 17616 / 249) protein is tRNA 5-methylaminomethyl-2-thiouridine biosynthesis bifunctional protein MnmC.